The sequence spans 138 residues: Endonuclease V (138 aa).

The active-site Nucleophile; via amide nitrogen is the threonine 2. Residue glutamate 23 is the Proton acceptor of the active site.

In terms of assembly, monomer.

It catalyses the reaction Cleaves the N-glycosidic bond between the 5'-pyrimidine residue in cyclobutadipyrimidine (in DNA) and the corresponding deoxy-D-ribose residue.. It carries out the reaction 2'-deoxyribonucleotide-(2'-deoxyribose 5'-phosphate)-2'-deoxyribonucleotide-DNA = a 3'-end 2'-deoxyribonucleotide-(2,3-dehydro-2,3-deoxyribose 5'-phosphate)-DNA + a 5'-end 5'-phospho-2'-deoxyribonucleoside-DNA + H(+). Its function is as follows. Participates in the repair of UV-damaged DNA by excising pyrimidine dimers that are the major UV-lesions. DNA glycosylase activity hydrolyzes the glycosylic bond of the 5' pyrimidine of the dimer. This leaves apurinic/apyrimidic (AP) sites in the DNA. These AP sites are removed by the AP lyase activity which cleaves the intrapyrimidine phosphodiester bond. Catalysis proceeds via a protonated imine covalent intermediate between the alpha-amino group of the N-terminal threonine residue and the C1' of the deoxyribose sugar of the 5' pyrimidine at the dimer site. In Enterobacteria phage T4 (Bacteriophage T4), this protein is Endonuclease V.